The following is a 178-amino-acid chain: Large ribosomal subunit protein uL16 (178 aa).

The protein belongs to the universal ribosomal protein uL16 family.

The protein is Large ribosomal subunit protein uL16 of Saccharolobus islandicus (strain Y.N.15.51 / Yellowstone #2) (Sulfolobus islandicus).